The chain runs to 469 residues: GTPase Der (469 aa).

EngA-type G domains follow at residues 3-166 (PVIA…PEDE) and 177-350 (LRLA…ESAN). GTP-binding positions include 9-16 (GRPNVGKS), 56-60 (DTGGI), 118-121 (NKVD), 183-190 (GRPNVGKS), 230-234 (DTAGV), and 295-298 (NKWD). The region spanning 351-435 (LKVSPAKLTQ…PVKIEFKTSE (85 aa)) is the KH-like domain.

It belongs to the TRAFAC class TrmE-Era-EngA-EngB-Septin-like GTPase superfamily. EngA (Der) GTPase family. Associates with the 50S ribosomal subunit.

Functionally, GTPase that plays an essential role in the late steps of ribosome biogenesis. The chain is GTPase Der from Acinetobacter baumannii (strain ACICU).